The chain runs to 95 residues: Phospholipase A2 inhibitor gammaCdcPLI (95 aa).

Disulfide bonds link cysteine 2/cysteine 26, cysteine 5/cysteine 12, cysteine 19/cysteine 30, and cysteine 61/cysteine 77.

Forms dimers or higher order oligomers in a temperature-dependent manner in vitro. In terms of tissue distribution, expressed by the liver.

The protein resides in the secreted. Its function is as follows. Inhibits the enzymatic activity of basic and acidic PLA2 from B.jararacussu and B.pauloensis, respectively, in a dose-dependent manner. Also inhibits myotoxicity and cytotoxicity of BnSp-7 of B.pauloensis. The sequence is that of Phospholipase A2 inhibitor gammaCdcPLI from Crotalus durissus collilineatus (Brazilian rattlesnake).